We begin with the raw amino-acid sequence, 605 residues long: Alpha-1,3-galactosidase A (605 aa).

An N-terminal signal peptide occupies residues 1–20 (MKKYLHILPACFLFYAAAHA). PbH1 repeat units lie at residues 256-278 (SKNI…VSQY), 312-334 (KGKV…NVHG), 421-443 (TPEV…LVTT), 444-466 (PRKV…LIEA), 477-507 (VKDV…HPSN), and 517-547 (HQNI…LFRN).

Belongs to the glycosyl hydrolase 110 family. A subfamily.

It carries out the reaction Hydrolysis of terminal, non-reducing branched (1-&gt;3)-alpha-D-galactosidic residues, producing free D-galactose.. It catalyses the reaction Hydrolysis of terminal, non-reducing alpha-D-galactose residues in alpha-D-galactosides, including galactose oligosaccharides, galactomannans and galactolipids.. Alpha-galactosidase that specifically removes branched alpha-1,3-linked galactose residues present in blood group B antigens. Has no activity toward linear alpha-1,3-linked galactose residues. The protein is Alpha-1,3-galactosidase A (glaA) of Bacteroides fragilis (strain ATCC 25285 / DSM 2151 / CCUG 4856 / JCM 11019 / LMG 10263 / NCTC 9343 / Onslow / VPI 2553 / EN-2).